We begin with the raw amino-acid sequence, 198 residues long: Large ribosomal subunit protein bL25 (198 aa).

The protein belongs to the bacterial ribosomal protein bL25 family. CTC subfamily. In terms of assembly, part of the 50S ribosomal subunit; part of the 5S rRNA/L5/L18/L25 subcomplex. Contacts the 5S rRNA. Binds to the 5S rRNA independently of L5 and L18.

This is one of the proteins that binds to the 5S RNA in the ribosome where it forms part of the central protuberance. The polypeptide is Large ribosomal subunit protein bL25 (Lysinibacillus sphaericus (strain C3-41)).